The chain runs to 357 residues: Fructose-bisphosphate aldolase, cytoplasmic isozyme (357 aa).

Residues R53 and K142 each coordinate substrate. E183 serves as the catalytic Proton acceptor. The active-site Schiff-base intermediate with dihydroxyacetone-P is the K225.

It belongs to the class I fructose-bisphosphate aldolase family.

Its subcellular location is the cytoplasm. The enzyme catalyses beta-D-fructose 1,6-bisphosphate = D-glyceraldehyde 3-phosphate + dihydroxyacetone phosphate. The protein operates within carbohydrate degradation; glycolysis; D-glyceraldehyde 3-phosphate and glycerone phosphate from D-glucose: step 4/4. This chain is Fructose-bisphosphate aldolase, cytoplasmic isozyme, found in Spinacia oleracea (Spinach).